The primary structure comprises 122 residues: UPF0102 protein RHE_CH00320 (122 aa).

This sequence belongs to the UPF0102 family.

This Rhizobium etli (strain ATCC 51251 / DSM 11541 / JCM 21823 / NBRC 15573 / CFN 42) protein is UPF0102 protein RHE_CH00320.